A 203-amino-acid polypeptide reads, in one-letter code: Urease accessory protein UreG (203 aa).

13–20 lines the GTP pocket; that stretch reads GPVGSGKT.

Belongs to the SIMIBI class G3E GTPase family. UreG subfamily. As to quaternary structure, homodimer. UreD, UreF and UreG form a complex that acts as a GTP-hydrolysis-dependent molecular chaperone, activating the urease apoprotein by helping to assemble the nickel containing metallocenter of UreC. The UreE protein probably delivers the nickel.

The protein resides in the cytoplasm. Functionally, facilitates the functional incorporation of the urease nickel metallocenter. This process requires GTP hydrolysis, probably effectuated by UreG. This Psychromonas ingrahamii (strain DSM 17664 / CCUG 51855 / 37) protein is Urease accessory protein UreG.